The sequence spans 351 residues: Phosphoribosylformylglycinamidine cyclo-ligase (351 aa).

The protein belongs to the AIR synthase family.

It localises to the cytoplasm. It catalyses the reaction 2-formamido-N(1)-(5-O-phospho-beta-D-ribosyl)acetamidine + ATP = 5-amino-1-(5-phospho-beta-D-ribosyl)imidazole + ADP + phosphate + H(+). It participates in purine metabolism; IMP biosynthesis via de novo pathway; 5-amino-1-(5-phospho-D-ribosyl)imidazole from N(2)-formyl-N(1)-(5-phospho-D-ribosyl)glycinamide: step 2/2. This Burkholderia ambifaria (strain ATCC BAA-244 / DSM 16087 / CCUG 44356 / LMG 19182 / AMMD) (Burkholderia cepacia (strain AMMD)) protein is Phosphoribosylformylglycinamidine cyclo-ligase.